Here is a 383-residue protein sequence, read N- to C-terminus: Serpin B5 (383 aa).

Asparagine 106, asparagine 133, asparagine 176, and asparagine 361 each carry an N-linked (GlcNAc...) asparagine glycan.

Belongs to the serpin family. Ov-serpin subfamily.

The protein localises to the secreted. The protein resides in the extracellular space. Its function is as follows. May not exhibit serine protease inhibitory activity. This Xenopus laevis (African clawed frog) protein is Serpin B5 (serpinb5).